The primary structure comprises 154 residues: MKLRDSLAVNKSIRLQAEAETWQDAVKIGVDLLVAADVVEPRYYQAILDGVEQFGPYFVIAPGLTMPHGRPEEGVKKTGFSLVTLKKPLEFNHDDNDPVDILITMAAVDANTHQEVGIMQIVNLFEDEENFDRLRACRTEQEVLDLIDRTNAAA.

The region spanning 6 to 150 (SLAVNKSIRL…QEVLDLIDRT (145 aa)) is the PTS EIIA type-2 domain. His-68 acts as the Tele-phosphohistidine intermediate in catalysis. His-68 bears the Phosphohistidine mark.

It is found in the cytoplasm. In terms of biological role, the phosphoenolpyruvate-dependent sugar phosphotransferase system (sugar PTS), a major carbohydrate active transport system, catalyzes the phosphorylation of incoming sugar substrates concomitantly with their translocation across the cell membrane. The enzyme II UlaABC PTS system is involved in ascorbate transport. In Shigella dysenteriae serotype 1 (strain Sd197), this protein is Ascorbate-specific PTS system EIIA component (ulaC).